The chain runs to 1463 residues: Gag-Pol polyprotein (1463 aa).

G2 carries the N-myristoyl glycine; by host lipid modification. The tract at residues 7–31 (VLRGKKADELEKIRLRPGGKKKYRL) is interaction with Gp41. The Nuclear export signal motif lies at 16-22 (LEKIRLR). The short motif at 26–32 (KKKYRLK) is the Nuclear localization signal element. The interval 112-138 (TKTTEKMPSTSRPTAPPSGNGGNFPVQ) is disordered. Residues 191–228 (NCVGDHQAAMQIIREIINEEAADWDAQHPIPGPLPAGQ) form an interaction with human PPIA/CYPA and NUP153 region. The tract at residues 279–365 (YNPTNILDIK…GGPGQKARLM (87 aa)) is dimerization/Multimerization of capsid protein p24. 2 consecutive CCHC-type zinc fingers follow at residues 389 to 406 (IKCW…QCRA) and 410 to 427 (QGCW…KCPE). The segment at 441–508 (EAPQFPCGPN…TRDTMQRDDR (68 aa)) is disordered. Basic and acidic residues predominate over residues 462–508 (RPSRGPTREVHAAREKAERAEREAIQRSDRGLPAARETRDTMQRDDR). The tract at residues 513–517 (PQFSL) is dimerization of protease. The Peptidase A2 domain maps to 532–601 (VEVLLDTGAD…TPINIFGRNI (70 aa)). The active-site For protease activity; shared with dimeric partner is D537. 2 dimerization of protease regions span residues 561-567 (GIGGFIN) and 600-612 (NILT…LNLP). Residues 655 to 845 (EGQLEEAPPT…PPYQWMGYEL (191 aa)) form the Reverse transcriptase domain. Mg(2+)-binding residues include D721, D796, and D797. The segment at 838–846 (YQWMGYELW) is RT 'primer grip'. The Tryptophan repeat motif motif lies at 1008–1024 (WEQWWDNYWQVTWIPDW). One can recognise an RNase H type-1 domain in the interval 1044-1167 (ILGAETFYTD…VDHLVSQGIR (124 aa)). Mg(2+) contacts are provided by D1053, E1088, D1108, and D1159. An Integrase-type zinc finger spans residues 1173–1214 (EKIEPAQEEHEKYHSNVKELSHKFGLPKLVARQIVNTCTQCQ). Residues H1182, H1186, C1210, and C1213 each coordinate Zn(2+). An Integrase catalytic domain is found at 1223 to 1374 (QVNAELGTWQ…TPAERLINMV (152 aa)). Mg(2+) contacts are provided by D1234, D1286, and E1322. The segment at residues 1393-1440 (FRVYFREGRDQLWKGPGELLWKGDGAVIVKVGADIKIIPRRKAKIIKD) is a DNA-binding region (integrase-type).

As to quaternary structure, homotrimer; further assembles as hexamers of trimers. Interacts with gp41 (via C-terminus). Interacts with host CALM1; this interaction induces a conformational change in the Matrix protein, triggering exposure of the myristate group. Interacts with host AP3D1; this interaction allows the polyprotein trafficking to multivesicular bodies during virus assembly. Part of the pre-integration complex (PIC) which is composed of viral genome, matrix protein, Vpr and integrase. Homodimer; the homodimer further multimerizes as homohexamers or homopentamers. Interacts with human PPIA/CYPA. Interacts with human NUP153. Interacts with host PDZD8; this interaction stabilizes the capsid. Interacts with monkey TRIM5; this interaction destabilizes the capsid. In terms of assembly, homodimer, whose active site consists of two apposed aspartic acid residues. As to quaternary structure, heterodimer of p66 RT and p51 RT (RT p66/p51). Heterodimerization of RT is essential for DNA polymerase activity. The overall folding of the subdomains is similar in p66 RT and p51 RT but the spatial arrangements of the subdomains are dramatically different. Homotetramer; may further associate as a homohexadecamer. Part of the pre-integration complex (PIC) which is composed of viral genome, matrix protein, Vpr and integrase. Interacts with human SMARCB1/INI1 and human PSIP1/LEDGF isoform 1. Interacts with human KPNA3; this interaction might play a role in nuclear import of the pre-integration complex. Interacts with human NUP153; this interaction might play a role in nuclear import of the pre-integration complex. Mg(2+) serves as cofactor. Post-translationally, specific enzymatic cleavages by the viral protease yield mature proteins. The protease is released by autocatalytic cleavage. The polyprotein is cleaved during and after budding, this process is termed maturation. Proteolytic cleavage of p66 RT removes the RNase H domain to yield the p51 RT subunit. Nucleocapsid protein p7 might be further cleaved after virus entry.

The protein resides in the host cell membrane. It is found in the host endosome. The protein localises to the host multivesicular body. It localises to the virion membrane. Its subcellular location is the host nucleus. The protein resides in the host cytoplasm. It is found in the virion. The catalysed reaction is Endopeptidase for which the P1 residue is preferably hydrophobic.. It carries out the reaction Endohydrolysis of RNA in RNA/DNA hybrids. Three different cleavage modes: 1. sequence-specific internal cleavage of RNA. Human immunodeficiency virus type 1 and Moloney murine leukemia virus enzymes prefer to cleave the RNA strand one nucleotide away from the RNA-DNA junction. 2. RNA 5'-end directed cleavage 13-19 nucleotides from the RNA end. 3. DNA 3'-end directed cleavage 15-20 nucleotides away from the primer terminus.. It catalyses the reaction 3'-end directed exonucleolytic cleavage of viral RNA-DNA hybrid.. The enzyme catalyses DNA(n) + a 2'-deoxyribonucleoside 5'-triphosphate = DNA(n+1) + diphosphate. Protease: The viral protease is inhibited by many synthetic protease inhibitors (PIs), such as amprenavir, atazanavir, indinavir, loprinavir, nelfinavir, ritonavir and saquinavir. Use of protease inhibitors in tritherapy regimens permit more ambitious therapeutic strategies. Reverse transcriptase/ribonuclease H: RT can be inhibited either by nucleoside RT inhibitors (NRTIs) or by non nucleoside RT inhibitors (NNRTIs). NRTIs act as chain terminators, whereas NNRTIs inhibit DNA polymerization by binding a small hydrophobic pocket near the RT active site and inducing an allosteric change in this region. Classical NRTIs are abacavir, adefovir (PMEA), didanosine (ddI), lamivudine (3TC), stavudine (d4T), tenofovir (PMPA), zalcitabine (ddC), and zidovudine (AZT). Classical NNRTIs are atevirdine (BHAP U-87201E), delavirdine, efavirenz (DMP-266), emivirine (I-EBU), and nevirapine (BI-RG-587). The tritherapies used as a basic effective treatment of AIDS associate two NRTIs and one NNRTI. Mediates, with Gag polyprotein, the essential events in virion assembly, including binding the plasma membrane, making the protein-protein interactions necessary to create spherical particles, recruiting the viral Env proteins, and packaging the genomic RNA via direct interactions with the RNA packaging sequence (Psi). Gag-Pol polyprotein may regulate its own translation, by the binding genomic RNA in the 5'-UTR. At low concentration, the polyprotein would promote translation, whereas at high concentration, the polyprotein would encapsidate genomic RNA and then shut off translation. In terms of biological role, targets the polyprotein to the plasma membrane via a multipartite membrane-binding signal, that includes its myristoylated N-terminus. Matrix protein is part of the pre-integration complex. Implicated in the release from host cell mediated by Vpu. Binds to RNA. Its function is as follows. Forms the conical core that encapsulates the genomic RNA-nucleocapsid complex in the virion. Most core are conical, with only 7% tubular. The core is constituted by capsid protein hexamer subunits. The core is disassembled soon after virion entry. Host restriction factors such as TRIM5-alpha or TRIMCyp bind retroviral capsids and cause premature capsid disassembly, leading to blocks in reverse transcription. Capsid restriction by TRIM5 is one of the factors which restricts HIV-1 to the human species. Host PIN1 apparently facilitates the virion uncoating. On the other hand, interactions with PDZD8 or CYPA stabilize the capsid. Functionally, encapsulates and protects viral dimeric unspliced genomic RNA (gRNA). Binds these RNAs through its zinc fingers. Acts as a nucleic acid chaperone which is involved in rearangement of nucleic acid secondary structure during gRNA retrotranscription. Also facilitates template switch leading to recombination. As part of the polyprotein, participates in gRNA dimerization, packaging, tRNA incorporation and virion assembly. Aspartyl protease that mediates proteolytic cleavages of Gag and Gag-Pol polyproteins during or shortly after the release of the virion from the plasma membrane. Cleavages take place as an ordered, step-wise cascade to yield mature proteins. This process is called maturation. Displays maximal activity during the budding process just prior to particle release from the cell. Also cleaves Nef and Vif, probably concomitantly with viral structural proteins on maturation of virus particles. Hydrolyzes host EIF4GI and PABP1 in order to shut off the capped cellular mRNA translation. The resulting inhibition of cellular protein synthesis serves to ensure maximal viral gene expression and to evade host immune response. In terms of biological role, multifunctional enzyme that converts the viral RNA genome into dsDNA in the cytoplasm, shortly after virus entry into the cell. This enzyme displays a DNA polymerase activity that can copy either DNA or RNA templates, and a ribonuclease H (RNase H) activity that cleaves the RNA strand of RNA-DNA heteroduplexes in a partially processive 3' to 5' endonucleasic mode. Conversion of viral genomic RNA into dsDNA requires many steps. A tRNA(3)-Lys binds to the primer-binding site (PBS) situated at the 5'-end of the viral RNA. RT uses the 3' end of the tRNA primer to perform a short round of RNA-dependent minus-strand DNA synthesis. The reading proceeds through the U5 region and ends after the repeated (R) region which is present at both ends of viral RNA. The portion of the RNA-DNA heteroduplex is digested by the RNase H, resulting in a ssDNA product attached to the tRNA primer. This ssDNA/tRNA hybridizes with the identical R region situated at the 3' end of viral RNA. This template exchange, known as minus-strand DNA strong stop transfer, can be either intra- or intermolecular. RT uses the 3' end of this newly synthesized short ssDNA to perform the RNA-dependent minus-strand DNA synthesis of the whole template. RNase H digests the RNA template except for two polypurine tracts (PPTs) situated at the 5'-end and near the center of the genome. It is not clear if both polymerase and RNase H activities are simultaneous. RNase H probably can proceed both in a polymerase-dependent (RNA cut into small fragments by the same RT performing DNA synthesis) and a polymerase-independent mode (cleavage of remaining RNA fragments by free RTs). Secondly, RT performs DNA-directed plus-strand DNA synthesis using the PPTs that have not been removed by RNase H as primers. PPTs and tRNA primers are then removed by RNase H. The 3' and 5' ssDNA PBS regions hybridize to form a circular dsDNA intermediate. Strand displacement synthesis by RT to the PBS and PPT ends produces a blunt ended, linear dsDNA copy of the viral genome that includes long terminal repeats (LTRs) at both ends. Its function is as follows. Catalyzes viral DNA integration into the host chromosome, by performing a series of DNA cutting and joining reactions. This enzyme activity takes place after virion entry into a cell and reverse transcription of the RNA genome in dsDNA. The first step in the integration process is 3' processing. This step requires a complex comprising the viral genome, matrix protein, Vpr and integrase. This complex is called the pre-integration complex (PIC). The integrase protein removes 2 nucleotides from each 3' end of the viral DNA, leaving recessed CA OH's at the 3' ends. In the second step, the PIC enters cell nucleus. This process is mediated through integrase and Vpr proteins, and allows the virus to infect a non dividing cell. This ability to enter the nucleus is specific of lentiviruses, other retroviruses cannot and rely on cell division to access cell chromosomes. In the third step, termed strand transfer, the integrase protein joins the previously processed 3' ends to the 5' ends of strands of target cellular DNA at the site of integration. The 5'-ends are produced by integrase-catalyzed staggered cuts, 5 bp apart. A Y-shaped, gapped, recombination intermediate results, with the 5'-ends of the viral DNA strands and the 3' ends of target DNA strands remaining unjoined, flanking a gap of 5 bp. The last step is viral DNA integration into host chromosome. This involves host DNA repair synthesis in which the 5 bp gaps between the unjoined strands are filled in and then ligated. Since this process occurs at both cuts flanking the HIV genome, a 5 bp duplication of host DNA is produced at the ends of HIV-1 integration. Alternatively, Integrase may catalyze the excision of viral DNA just after strand transfer, this is termed disintegration. This chain is Gag-Pol polyprotein (gag-pol), found in Human immunodeficiency virus type 2 subtype A (isolate ST) (HIV-2).